The following is a 609-amino-acid chain: Glutamine--fructose-6-phosphate aminotransferase [isomerizing] (609 aa).

Cys2 (nucleophile; for GATase activity) is an active-site residue. One can recognise a Glutamine amidotransferase type-2 domain in the interval 2–218 (CGIVGAIAQR…EGDIAEITRR (217 aa)). SIS domains are found at residues 286–426 (ADEL…LKGL) and 458–599 (LAED…VDQP). The For Fru-6P isomerization activity role is filled by Lys604.

In terms of assembly, homodimer.

The protein resides in the cytoplasm. It catalyses the reaction D-fructose 6-phosphate + L-glutamine = D-glucosamine 6-phosphate + L-glutamate. Its function is as follows. Catalyzes the first step in hexosamine metabolism, converting fructose-6P into glucosamine-6P using glutamine as a nitrogen source. In Escherichia coli O157:H7, this protein is Glutamine--fructose-6-phosphate aminotransferase [isomerizing].